The following is a 223-amino-acid chain: MAQETNHSQAPMLCSTGCGFYGNPRTNGMCSVCYKEHLQRQNSSNGRISPPAASVSSLSESLPVQCADGSVPDAQSALDSTSSSMQPGPVSNQSLLSESVAPSQVDSTSVDKAVSETEDLQGPRAEGLVPLECDPPSSVSDTTQQPSEEQSKSLEKPKQKKNRCFMCRKKVGLTGFECRCGNVYCGVHRYSDVHNCSYNYKADAAEKIRKENPVVVGEKIQKI.

An A20-type zinc finger spans residues 8-42; that stretch reads SQAPMLCSTGCGFYGNPRTNGMCSVCYKEHLQRQN. Cys-14, Cys-18, Cys-30, and Cys-33 together coordinate Zn(2+). A disordered region spans residues 41-155; it reads QNSSNGRISP…PSEEQSKSLE (115 aa). A Phosphoserine modification is found at Ser-49. Polar residues-rich tracts occupy residues 77-110 and 137-148; these read ALDS…STSV and SSVSDTTQQPSE. The segment at 158–204 adopts an AN1-type zinc-finger fold; it reads KQKKNRCFMCRKKVGLTGFECRCGNVYCGVHRYSDVHNCSYNYKADA. Zn(2+) is bound by residues Cys-164, Cys-167, Cys-178, Cys-180, Cys-185, His-188, His-194, and Cys-196. Lys-219 carries the post-translational modification N6-acetyllysine.

Interacts with PKN1. Interacts with TRAF2. Interacts with mono- and polyubiquitin. Interacts with PEX6. Interacts with PEX5 (Cys-linked ubiquitinated).

The protein localises to the cytoplasm. Involved in regulation of TNF-alpha induced NF-kappa-B activation and apoptosis. Involved in modulation of 'Lys-48'-linked polyubiquitination status of TRAF2 and decreases association of TRAF2 with RIPK1. Required for PTS1 target sequence-dependent protein import into peroxisomes and PEX5 stability; may cooperate with PEX6. In vitro involved in PEX5 export from the cytosol to peroxisomes. The protein is AN1-type zinc finger protein 6 (Zfand6) of Mus musculus (Mouse).